A 312-amino-acid polypeptide reads, in one-letter code: 4-hydroxyproline 2-epimerase (312 aa).

Cys-88 (proton acceptor) is an active-site residue. Substrate contacts are provided by residues 89–90, His-208, and Asp-234; that span reads GH. Cys-238 (proton donor) is an active-site residue. 239–240 is a binding site for substrate; it reads GT.

This sequence belongs to the proline racemase family.

It carries out the reaction trans-4-hydroxy-L-proline = cis-4-hydroxy-D-proline. Its function is as follows. Catalyzes the epimerization of trans-4-hydroxy-L-proline (t4LHyp) to cis-4-hydroxy-D-proline (c4DHyp). Is likely involved in a degradation pathway that converts t4LHyp to alpha-ketoglutarate. Can also catalyze the epimerization of trans-3-hydroxy-L-proline (t3LHyp) to cis-3-hydroxy-D-proline (c3DHyp), albeit with 500-fold lower efficiency. Displays no proline racemase activity. In Xanthomonas campestris pv. campestris (strain ATCC 33913 / DSM 3586 / NCPPB 528 / LMG 568 / P 25), this protein is 4-hydroxyproline 2-epimerase.